The following is a 378-amino-acid chain: UPF0725 protein At1g23970 (378 aa).

This sequence belongs to the UPF0725 (EMB2204) family.

The sequence is that of UPF0725 protein At1g23970 from Arabidopsis thaliana (Mouse-ear cress).